We begin with the raw amino-acid sequence, 431 residues long: Enolase (431 aa).

Glutamine 167 contributes to the (2R)-2-phosphoglycerate binding site. Catalysis depends on glutamate 209, which acts as the Proton donor. Mg(2+) is bound by residues aspartate 246, glutamate 289, and aspartate 316. Lysine 341, arginine 370, serine 371, and lysine 392 together coordinate (2R)-2-phosphoglycerate. Lysine 341 functions as the Proton acceptor in the catalytic mechanism.

The protein belongs to the enolase family. Component of the RNA degradosome, a multiprotein complex involved in RNA processing and mRNA degradation. Mg(2+) serves as cofactor.

The protein localises to the cytoplasm. The protein resides in the secreted. It is found in the cell surface. It carries out the reaction (2R)-2-phosphoglycerate = phosphoenolpyruvate + H2O. The protein operates within carbohydrate degradation; glycolysis; pyruvate from D-glyceraldehyde 3-phosphate: step 4/5. Functionally, catalyzes the reversible conversion of 2-phosphoglycerate (2-PG) into phosphoenolpyruvate (PEP). It is essential for the degradation of carbohydrates via glycolysis. The sequence is that of Enolase from Chromohalobacter salexigens (strain ATCC BAA-138 / DSM 3043 / CIP 106854 / NCIMB 13768 / 1H11).